Consider the following 311-residue polypeptide: Ribosomal RNA small subunit methyltransferase H (311 aa).

S-adenosyl-L-methionine-binding positions include 41–43 (GGH), aspartate 61, phenylalanine 85, aspartate 102, and glutamine 109.

This sequence belongs to the methyltransferase superfamily. RsmH family.

Its subcellular location is the cytoplasm. The enzyme catalyses cytidine(1402) in 16S rRNA + S-adenosyl-L-methionine = N(4)-methylcytidine(1402) in 16S rRNA + S-adenosyl-L-homocysteine + H(+). Specifically methylates the N4 position of cytidine in position 1402 (C1402) of 16S rRNA. This is Ribosomal RNA small subunit methyltransferase H from Paracidovorax citrulli (strain AAC00-1) (Acidovorax citrulli).